A 274-amino-acid polypeptide reads, in one-letter code: Diaminopimelate epimerase (274 aa).

Substrate contacts are provided by Asn11, Gln44, and Asn64. Cys73 functions as the Proton donor in the catalytic mechanism. Substrate is bound by residues 74–75, Asn157, Asn190, and 208–209; these read GN and ER. Catalysis depends on Cys217, which acts as the Proton acceptor. 218–219 lines the substrate pocket; the sequence is GS.

The protein belongs to the diaminopimelate epimerase family. Homodimer.

The protein localises to the cytoplasm. It catalyses the reaction (2S,6S)-2,6-diaminopimelate = meso-2,6-diaminopimelate. It functions in the pathway amino-acid biosynthesis; L-lysine biosynthesis via DAP pathway; DL-2,6-diaminopimelate from LL-2,6-diaminopimelate: step 1/1. Its function is as follows. Catalyzes the stereoinversion of LL-2,6-diaminopimelate (L,L-DAP) to meso-diaminopimelate (meso-DAP), a precursor of L-lysine and an essential component of the bacterial peptidoglycan. In Escherichia fergusonii (strain ATCC 35469 / DSM 13698 / CCUG 18766 / IAM 14443 / JCM 21226 / LMG 7866 / NBRC 102419 / NCTC 12128 / CDC 0568-73), this protein is Diaminopimelate epimerase.